Reading from the N-terminus, the 1169-residue chain is Pesticidal crystal protein Cry1Gb (1169 aa).

This sequence belongs to the delta endotoxin family.

Promotes colloidosmotic lysis by binding to the midgut epithelial cells of lepidopteran larvae. Toxic to Pieris rapae. The chain is Pesticidal crystal protein Cry1Gb (cry1Gb) from Bacillus thuringiensis subsp. wuhanensis.